The primary structure comprises 293 residues: MGQKIHPTGFRLAVSRNWASRWYANNRDFAGMLAEDIKVREYLKAKLKNAAVSRILIERPAKNARITIYSARPGVVIGKKGEDIENLKKELASRLGVPVAVNIEEVRKPEIDAKLIADSITQQLEKRIMFRRAMKRAMQNAMRLGAQGIKIMSSGRLNGIEIARTEWYREGRVPLHTLRADIDYGTSEAFTTYGVIGLKVWVYKGDTLGRNDLPAVETPRPEEERRPRGPRRDGRPGGDRAGAGRGPRRPMGGNAAPADGSDKPAGAGGTDATAVKRVRKVDAPATAADGKGE.

The KH type-2 domain occupies 39 to 107; the sequence is VREYLKAKLK…PVAVNIEEVR (69 aa). The tract at residues 210–293 is disordered; the sequence is RNDLPAVETP…PATAADGKGE (84 aa). Residues 219-238 are compositionally biased toward basic and acidic residues; that stretch reads PRPEEERRPRGPRRDGRPGG.

Belongs to the universal ribosomal protein uS3 family. Part of the 30S ribosomal subunit. Forms a tight complex with proteins S10 and S14.

In terms of biological role, binds the lower part of the 30S subunit head. Binds mRNA in the 70S ribosome, positioning it for translation. The polypeptide is Small ribosomal subunit protein uS3 (Paracidovorax citrulli (strain AAC00-1) (Acidovorax citrulli)).